The sequence spans 409 residues: Dipeptidase 1 (409 aa).

The first 16 residues, 1-16 (MWTSWWLWPLVAVCAA), serve as a signal peptide directing secretion. His-36 and Asp-38 together coordinate Zn(2+). Asn-57 carries N-linked (GlcNAc...) asparagine glycosylation. A disulfide bond links Cys-87 and Cys-170. Position 141 (Glu-141) interacts with Zn(2+). His-168 lines the substrate pocket. Positions 214 and 235 each coordinate Zn(2+). A disulfide bond links Cys-242 and Cys-274. Arg-246 contacts substrate. Asn-279 is a glycosylation site (N-linked (GlcNAc...) asparagine). Position 304 (Asp-304) interacts with substrate. Ser-384 is lipidated: GPI-anchor amidated serine. Positions 385-409 (AAPSLHLPPGSLLASLVPLLLLSLP) are cleaved as a propeptide — removed in mature form.

Belongs to the metallo-dependent hydrolases superfamily. Peptidase M19 family. Homodimer; disulfide-linked. It depends on Zn(2+) as a cofactor.

It is found in the apical cell membrane. The protein resides in the cell projection. Its subcellular location is the microvillus membrane. The protein localises to the cell membrane. The catalysed reaction is an L-aminoacyl-L-amino acid + H2O = 2 an L-alpha-amino acid. The enzyme catalyses leukotriene D4 + H2O = leukotriene E4 + glycine. It carries out the reaction L-cystine-bis-glycine + 2 H2O = L-cystine + 2 glycine. It catalyses the reaction a beta-lactam + H2O = a substituted beta-amino acid. The catalysed reaction is glycyldehydrophenylalanine + H2O = 2,3-didehydrophenylalanine + glycine. Inhibited by L-penicillamine. Inhibited by cilastatin. In terms of biological role, hydrolyzes a wide range of dipeptides. Hydrolyzes the conversion of leukotriene D4 to leukotriene E4. Hydrolyzes cystinyl-bis-glycine (cys-bis-gly) formed during glutathione degradation. Also possesses beta lactamase activity and hydrolytically inactivates beta-lactam antibiotics. Functionally, independently of its dipeptidase activity, acts as an adhesion receptor for neutrophil recruitment from bloodstream into inflamed lungs and liver. In Sus scrofa (Pig), this protein is Dipeptidase 1 (DPEP1).